The chain runs to 434 residues: Adenylosuccinate synthetase (434 aa).

Residues 12–18 (GDEGKGK) and 40–42 (GHT) contribute to the GTP site. The active-site Proton acceptor is D13. Residues D13 and G40 each coordinate Mg(2+). IMP is bound by residues 13–16 (DEGK), 38–41 (NAGH), T129, R143, Q224, T239, and R303. H41 functions as the Proton donor in the catalytic mechanism. 299 to 305 (AVTGRPR) lines the substrate pocket. GTP-binding positions include R305, 331–333 (KLD), and 413–415 (STG).

It belongs to the adenylosuccinate synthetase family. In terms of assembly, homodimer. Mg(2+) serves as cofactor.

The protein localises to the cytoplasm. The catalysed reaction is IMP + L-aspartate + GTP = N(6)-(1,2-dicarboxyethyl)-AMP + GDP + phosphate + 2 H(+). Its pathway is purine metabolism; AMP biosynthesis via de novo pathway; AMP from IMP: step 1/2. Functionally, plays an important role in the de novo pathway of purine nucleotide biosynthesis. Catalyzes the first committed step in the biosynthesis of AMP from IMP. The polypeptide is Adenylosuccinate synthetase (Solibacter usitatus (strain Ellin6076)).